The chain runs to 691 residues: MALVTLQVSSLDVGSNITPVQDDEKSRRKRMQRRQSFVMVKGAALLLQDEGEPIDTREPLSSSGPNEQQIHLQSMLRLLREEDTLTLAVRLEPVRSCLTRYLLVVSSTGKSNVEETLLLGVDFPHDGSLCCTIGTVLPIWSNTQVFLDGDGGFTVTSGMDIRTFKPISVQTMWSLLQMLHKACESALSNNVISSSLYSGLIYYQSNRSSPQVCLNAWTASPDIESARRDPATPEREETERIIKLKLRDILRESDLENITSKEVRSALEQHTLCALQDYKEFIDNEMIIILAQMDRPSEIFPYLYLGSEWNASNLEELQKNKVSHILNVTREIDNFFPELFMYLNIRVLDEENTNLMQYWKETHAFITTARHQGSRVLVHCKMGVSRSASTVIAYAMKEYEWTLETAIRHVKERRSIVQPNAGFMRQLQTYQGILGASKQRHSYLWDPSSAPSLPLMSPPPKNFSSPTTSPLTPRLQKMNLRTLMRSISEMEAADTISEEKESTVVLEETTLKQNFNVLESSSNNLQVTPKRNEHVLSKEQIIQEEKKVMELEKGPEWVVKNNVLEEMKETEERELPNFELPMSLNQSRERDQETIKESSVITQGSSSLDEVFESSTPTRSPEMASYACQKIQYFEQHSEGYSKVCFVDNLQSVSEEEKVTLVSKQLQTDEHGERKARITRQQNVIDTHEEL.

The DEK-C domain maps to 236 to 291 (EETERIIKLKLRDILRESDLENITSKEVRSALEQHTLCALQDYKEFIDNEMIIILA). The Tyrosine-protein phosphatase domain occupies 295-436 (RPSEIFPYLY…LQTYQGILGA (142 aa)). Cysteine 380 (phosphocysteine intermediate) is an active-site residue. Residues 532–580 (NEHVLSKEQIIQEEKKVMELEKGPEWVVKNNVLEEMKETEERELPNFEL) adopt a coiled-coil conformation. The interval 585–620 (NQSRERDQETIKESSVITQGSSSLDEVFESSTPTRS) is disordered. The segment covering 587 to 596 (SRERDQETIK) has biased composition (basic and acidic residues). A compositionally biased stretch (polar residues) spans 597–619 (ESSVITQGSSSLDEVFESSTPTR).

This sequence belongs to the protein-tyrosine phosphatase family. Interacts with actin and this stimulates phosphatase activity.

It is found in the cytoplasm. Its subcellular location is the cytoskeleton. The protein localises to the cleavage furrow. The protein resides in the midbody. The catalysed reaction is O-phospho-L-tyrosyl-[protein] + H2O = L-tyrosyl-[protein] + phosphate. The enzyme catalyses O-phospho-L-seryl-[protein] + H2O = L-seryl-[protein] + phosphate. It catalyses the reaction O-phospho-L-threonyl-[protein] + H2O = L-threonyl-[protein] + phosphate. Protein phosphatase which regulates actin filament dynamics. Dephosphorylates and activates the actin binding/depolymerizing factor cofilin, which subsequently binds to actin filaments and stimulates their disassembly. Required for completion of the gastrulation movement and for cytokinesis. This chain is Protein phosphatase Slingshot homolog (ssh), found in Xenopus laevis (African clawed frog).